The chain runs to 118 residues: MAEQVTSARATAKIVRVAPRKARLVLDTIRRKSVNEAYAILKFLPNTSTEDIYKVLNSAVANAENNFSLDREDLIVKEAFANEGPTLKRFRPRAKGSASPINKRTSHLTIVVAEKEAK.

The protein belongs to the universal ribosomal protein uL22 family. Part of the 50S ribosomal subunit.

In terms of biological role, this protein binds specifically to 23S rRNA; its binding is stimulated by other ribosomal proteins, e.g. L4, L17, and L20. It is important during the early stages of 50S assembly. It makes multiple contacts with different domains of the 23S rRNA in the assembled 50S subunit and ribosome. Functionally, the globular domain of the protein is located near the polypeptide exit tunnel on the outside of the subunit, while an extended beta-hairpin is found that lines the wall of the exit tunnel in the center of the 70S ribosome. This chain is Large ribosomal subunit protein uL22, found in Leuconostoc mesenteroides subsp. mesenteroides (strain ATCC 8293 / DSM 20343 / BCRC 11652 / CCM 1803 / JCM 6124 / NCDO 523 / NBRC 100496 / NCIMB 8023 / NCTC 12954 / NRRL B-1118 / 37Y).